A 558-amino-acid chain; its full sequence is MAALTRDPQFQKLQQWYREHGSELNLRRLFDADKDRFNHFSLTLNTNHGHILLDYSKNLVTEDVMRMLVDLAKSRGVEAARERMFNGEKINYTEGRAVLHVALRNRSNTPILVDGKDVMPEVNKVLDKMKSFCQRVRSGDWKGYTGKTITDVINIGIGGSDLGPLMVTEALKPYSSEGPRVWYVSNIDGTHIAKTLTQLNPESSLFIIASKTFTTQETITNAETAKEWFLQAAKDPSAVAKHFVALSTNTTKVKEFGIDPQNMFEFWDWVGGRYSLWSAIGLSIALHVGFDNFEQLLSGAHWMDQHFRTTPLEKNAPVLLALLGIWYINCFGCETHAMLPYDQYLHRFAAYFQQGDMESNGKYITKSGTRVDHQTGPIVWGEPGTNGQHAFYQLIHQGTKMIPCDFLIPVQTQHPIRKGLHHKILLANFLAQTEALMRGKSTDEARKELQAAGKSPEDLERLLPHKVFEGNRPTNSIVFTKLTPFMLGALVAMYEHKIFVQGIIWDINSFDQWGVELGKQLAKKIEPELDGSAQVTSHDASTNGLINFIKQQREARVQ.

A2 carries the post-translational modification N-acetylalanine. K12 is subject to N6-acetyllysine. K34 carries the N6-(2-hydroxyisobutyryl)lysine modification. S107 bears the Phosphoserine mark. T109 carries the post-translational modification Phosphothreonine. The residue at position 142 (K142) is an N6-acetyllysine. Residue G159 to S160 coordinates D-glucose 6-phosphate. Phosphoserine; by CK2 is present on S185. S210–T215 is a D-glucose 6-phosphate binding site. T250 is subject to Phosphothreonine. Residues Q354, E358, and H389 each contribute to the D-glucose 6-phosphate site. The active-site Proton donor is E358. Residue H389 is part of the active site. N6-acetyllysine; alternate is present on K454. K454 carries the post-translational modification N6-malonyllysine; alternate. The residue at position 454 (K454) is an N6-succinyllysine; alternate. At S455 the chain carries Phosphoserine. K519 lines the D-glucose 6-phosphate pocket. Residue K519 is part of the active site.

This sequence belongs to the GPI family. In terms of assembly, homodimer; in the catalytically active form. Monomer in the secreted form. Phosphorylation at Ser-185 by CK2 has been shown to decrease enzymatic activity and may contribute to secretion by a non-classical secretory pathway. In terms of processing, ISGylated.

The protein resides in the cytoplasm. It is found in the secreted. It catalyses the reaction alpha-D-glucose 6-phosphate = beta-D-fructose 6-phosphate. It functions in the pathway carbohydrate degradation; glycolysis; D-glyceraldehyde 3-phosphate and glycerone phosphate from D-glucose: step 2/4. Its function is as follows. In the cytoplasm, catalyzes the conversion of glucose-6-phosphate to fructose-6-phosphate, the second step in glycolysis, and the reverse reaction during gluconeogenesis. Besides it's role as a glycolytic enzyme, also acts as a secreted cytokine: acts as an angiogenic factor (AMF) that stimulates endothelial cell motility. Acts as a neurotrophic factor, neuroleukin, for spinal and sensory neurons. It is secreted by lectin-stimulated T-cells and induces immunoglobulin secretion. The chain is Glucose-6-phosphate isomerase from Macaca fascicularis (Crab-eating macaque).